Consider the following 400-residue polypeptide: 3-hydroxybenzoate 6-hydroxylase (400 aa).

The protein belongs to the 3-hydroxybenzoate 6-hydroxylase family. In terms of assembly, monomer. FAD serves as cofactor.

The catalysed reaction is 3-hydroxybenzoate + NADH + O2 + H(+) = 2,5-dihydroxybenzoate + NAD(+) + H2O. Its function is as follows. Catalyzes the NAD- or NADP-dependent conversion of 3-hydroxybenzoate to gentisate. The affinity of the enzyme toward NAD is twice as high as for NADP. This chain is 3-hydroxybenzoate 6-hydroxylase (nagX), found in Polaromonas naphthalenivorans (strain CJ2).